The chain runs to 406 residues: Multifunctional CCA protein (406 aa).

ATP-binding residues include G8 and R11. Residues G8 and R11 each coordinate CTP. The Mg(2+) site is built by D21 and D23. 3 residues coordinate ATP: R91, R138, and R141. Residues R91, R138, and R141 each contribute to the CTP site. The HD domain occupies 229-331 (TGIHQEMVSD…LELLGRCDAL (103 aa)).

The protein belongs to the tRNA nucleotidyltransferase/poly(A) polymerase family. Bacterial CCA-adding enzyme type 1 subfamily. In terms of assembly, monomer. Can also form homodimers and oligomers. Mg(2+) serves as cofactor. The cofactor is Ni(2+).

It catalyses the reaction a tRNA precursor + 2 CTP + ATP = a tRNA with a 3' CCA end + 3 diphosphate. The catalysed reaction is a tRNA with a 3' CCA end + 2 CTP + ATP = a tRNA with a 3' CCACCA end + 3 diphosphate. Catalyzes the addition and repair of the essential 3'-terminal CCA sequence in tRNAs without using a nucleic acid template. Adds these three nucleotides in the order of C, C, and A to the tRNA nucleotide-73, using CTP and ATP as substrates and producing inorganic pyrophosphate. tRNA 3'-terminal CCA addition is required both for tRNA processing and repair. Also involved in tRNA surveillance by mediating tandem CCA addition to generate a CCACCA at the 3' terminus of unstable tRNAs. While stable tRNAs receive only 3'-terminal CCA, unstable tRNAs are marked with CCACCA and rapidly degraded. The sequence is that of Multifunctional CCA protein from Stenotrophomonas maltophilia (strain K279a).